We begin with the raw amino-acid sequence, 196 residues long: uncharacterized protein (196 aa).

The HTH cro/C1-type domain maps to 12–66 (LRAAREAQKMSQRELSARSGLTQSHISQIERGTMEPGLGSLVDVARALDLEIVLA). The H-T-H motif DNA-binding region spans 23–42 (QRELSARSGLTQSHISQIER). The disordered stretch occupies residues 174-196 (VHRDRDDAVPRSAYALDEEDDNA).

This is an uncharacterized protein from Sinorhizobium fredii (strain NBRC 101917 / NGR234).